A 735-amino-acid chain; its full sequence is Protein argonaute (735 aa).

The segment at 1–94 is N-terminal domain; sequence MDLLSNLRRS…LVQMGTKQLD (94 aa). The linker L1 stretch occupies residues 95 to 180; that stretch reads CRNDAHRCAL…IDIHHRFYTP (86 aa). Residues 181–284 are PAZ domain; it reads WTVHQWLEQY…SPSLTMEMLA (104 aa). Residues 285–369 form a linker L2 region; that stretch reads KVAEDSTVCD…SKTADIRNKG (85 aa). Residues 370–498 form a mid domain region; the sequence is CAKIGETSFG…LLCKAGWQPI (129 aa). The segment at 499-735 is PIWI domain; the sequence is QLESVDHPEV…NISRDKLIAV (237 aa). Active-site residues include Asp-516, Glu-550, Asp-584, and Asp-709. Asp-516 is a Mn(2+) binding site. Mn(2+) is bound by residues Asp-584, Asp-709, and Val-735.

It belongs to the argonaute family. Long pAgo subfamily. Copurifies with SSB proteins Synpcc7942_0079 and Synpcc7942_0301 as well as other proteins. Mn(2+) is required as a cofactor.

A DNA-guided ssDNA endonuclease that might play a role in defense against invading mobile genetic elements. Uses short ssDNA sequences as guides (gDNA) to bind complementary target strands, resulting in cleavage of the target DNA (tDNA). The cleavage site is 10 nucleotides (nt) downstream of the target residue base-paired with the 5'-end of the gDNA. Both 5'-P and 5'-OH gDNAs confer activity; a 5'-OH guide cleaves between nt 10-11 and nt 11-12. Guide DNA mismatches in the seed (nt 2-9) can enhance activity, mismatches 1-5 nt after the cleavage site block activity. Has no appreciable activity with guide RNA or on target RNA. In situ binds to 5'-phosphorylated DNA 14-20 nt in length; small DNA maps over the chromosome and plasmid with some preference for the replication origin and the probable termination site. Also has weak guide-independent nuclease activity on DNA called 'chopping'. Overexpression of wild-type or catalytically inactive mutant has no visible effect during growth under continuous high light for up to a month. The sequence is that of Protein argonaute from Synechococcus elongatus (strain ATCC 33912 / PCC 7942 / FACHB-805) (Anacystis nidulans R2).